We begin with the raw amino-acid sequence, 194 residues long: Ribosome maturation factor RimM (194 aa).

In terms of domain architecture, PRC barrel spans 113–194; the sequence is DGEYYWIDLI…RIVADWGLDY (82 aa).

It belongs to the RimM family. As to quaternary structure, binds ribosomal protein uS19.

It localises to the cytoplasm. An accessory protein needed during the final step in the assembly of 30S ribosomal subunit, possibly for assembly of the head region. Essential for efficient processing of 16S rRNA. May be needed both before and after RbfA during the maturation of 16S rRNA. It has affinity for free ribosomal 30S subunits but not for 70S ribosomes. The sequence is that of Ribosome maturation factor RimM from Leptothrix cholodnii (strain ATCC 51168 / LMG 8142 / SP-6) (Leptothrix discophora (strain SP-6)).